Here is a 362-residue protein sequence, read N- to C-terminus: Fe-S cluster assembly protein DRE2 (362 aa).

The disordered stretch occupies residues 1 to 28 (MAPGLDLTPDFHPPTTTTTTTNNAPPQQ). Residues 15 to 28 (TTTTTTTNNAPPQQ) show a composition bias toward low complexity. The tract at residues 24-165 (APPQQRTLLL…KPEYAEEEAV (142 aa)) is N-terminal SAM-like domain. The tract at residues 166–254 (PLRFGKKKAA…EETLLTEEDL (89 aa)) is linker. 4 residues coordinate [2Fe-2S] cluster: cysteine 264, cysteine 275, cysteine 278, and cysteine 280. The interval 264–280 (CQPQPGKKRRACKDCTC) is fe-S binding site A. Positions 325, 328, 336, and 339 each coordinate [4Fe-4S] cluster. 2 consecutive short sequence motifs (cx2C motif) follow at residues 325–328 (CGSC) and 336–339 (CSDC). Residues 325–339 (CGSCYLGDAFRCSDC) are fe-S binding site B.

The protein belongs to the anamorsin family. In terms of assembly, monomer. Interacts with TAH18. Interacts with MIA40. [2Fe-2S] cluster is required as a cofactor. It depends on [4Fe-4S] cluster as a cofactor.

It localises to the cytoplasm. The protein localises to the mitochondrion intermembrane space. In terms of biological role, component of the cytosolic iron-sulfur (Fe-S) protein assembly (CIA) machinery required for the maturation of extramitochondrial Fe-S proteins. Part of an electron transfer chain functioning in an early step of cytosolic Fe-S biogenesis, facilitating the de novo assembly of a [4Fe-4S] cluster on the scaffold complex CFD1-NBP35. Electrons are transferred to DRE2 from NADPH via the FAD- and FMN-containing protein TAH18. TAH18-DRE2 are also required for the assembly of the diferric tyrosyl radical cofactor of ribonucleotide reductase (RNR), probably by providing electrons for reduction during radical cofactor maturation in the catalytic small subunit RNR2. This is Fe-S cluster assembly protein DRE2 from Chaetomium globosum (strain ATCC 6205 / CBS 148.51 / DSM 1962 / NBRC 6347 / NRRL 1970) (Soil fungus).